The chain runs to 426 residues: 3-phosphoshikimate 1-carboxyvinyltransferase (426 aa).

The 3-phosphoshikimate site is built by K22, S23, and R27. Phosphoenolpyruvate is bound at residue K22. Residues G96 and R124 each contribute to the phosphoenolpyruvate site. 3-phosphoshikimate is bound by residues S170, S171, Q172, S198, D314, N337, and K341. Q172 provides a ligand contact to phosphoenolpyruvate. D314 (proton acceptor) is an active-site residue. R345, R387, and K412 together coordinate phosphoenolpyruvate.

This sequence belongs to the EPSP synthase family. Monomer.

Its subcellular location is the cytoplasm. The enzyme catalyses 3-phosphoshikimate + phosphoenolpyruvate = 5-O-(1-carboxyvinyl)-3-phosphoshikimate + phosphate. The protein operates within metabolic intermediate biosynthesis; chorismate biosynthesis; chorismate from D-erythrose 4-phosphate and phosphoenolpyruvate: step 6/7. Its function is as follows. Catalyzes the transfer of the enolpyruvyl moiety of phosphoenolpyruvate (PEP) to the 5-hydroxyl of shikimate-3-phosphate (S3P) to produce enolpyruvyl shikimate-3-phosphate and inorganic phosphate. This Shewanella pealeana (strain ATCC 700345 / ANG-SQ1) protein is 3-phosphoshikimate 1-carboxyvinyltransferase.